We begin with the raw amino-acid sequence, 429 residues long: Fez family zinc finger protein 1 (429 aa).

Positions 29–44 (PLAFSIERIMARTPEP) match the Engrailed homology 1 repressor motif. C2H2-type zinc fingers lie at residues 247–269 (FTCE…MPVH), 275–297 (FVCK…KIIH), 303–325 (HKCN…TRIH), 331–353 (FICE…KLTH), 359–381 (FKCN…MHTH), and 387–410 (FTCP…RKLH). Residues 409–429 (LHDISPGPHSPPTPTGNTEGQ) are disordered.

This sequence belongs to the krueppel C2H2-type zinc-finger protein family.

It localises to the nucleus. Transcription repressor. Involved in the development of the forebrain region. This Danio rerio (Zebrafish) protein is Fez family zinc finger protein 1 (fezf1).